A 163-amino-acid chain; its full sequence is HTH-type transcriptional regulator IscR (163 aa).

The 130-residue stretch at 2-131 (RLTSKGRYAV…NNITLGELVN (130 aa)) folds into the HTH rrf2-type domain. The segment at residues 28 to 51 (LADISERQGISLSYLEQLFSRLRK) is a DNA-binding region (H-T-H motif). Residues C92, C98, and C104 each contribute to the [2Fe-2S] cluster site.

It depends on [2Fe-2S] cluster as a cofactor.

Its function is as follows. Regulates the transcription of several operons and genes involved in the biogenesis of Fe-S clusters and Fe-S-containing proteins. This chain is HTH-type transcriptional regulator IscR, found in Enterobacter sp. (strain 638).